A 432-amino-acid polypeptide reads, in one-letter code: Glutamyl-tRNA reductase (432 aa).

Substrate-binding positions include 50–53 (TCNR), S110, 115–117 (ETQ), and Q121. Catalysis depends on C51, which acts as the Nucleophile. 190 to 195 (GAGEMS) is a binding site for NADP(+).

The protein belongs to the glutamyl-tRNA reductase family. As to quaternary structure, homodimer.

It catalyses the reaction (S)-4-amino-5-oxopentanoate + tRNA(Glu) + NADP(+) = L-glutamyl-tRNA(Glu) + NADPH + H(+). It participates in porphyrin-containing compound metabolism; protoporphyrin-IX biosynthesis; 5-aminolevulinate from L-glutamyl-tRNA(Glu): step 1/2. Its function is as follows. Catalyzes the NADPH-dependent reduction of glutamyl-tRNA(Glu) to glutamate 1-semialdehyde (GSA). This chain is Glutamyl-tRNA reductase, found in Aliarcobacter butzleri (strain RM4018) (Arcobacter butzleri).